The chain runs to 150 residues: Deoxyuridine 5'-triphosphate nucleotidohydrolase (150 aa).

Substrate-binding positions include 69–71, Asn82, 86–88, and Met96; these read RSG and LID.

This sequence belongs to the dUTPase family. It depends on Mg(2+) as a cofactor.

The enzyme catalyses dUTP + H2O = dUMP + diphosphate + H(+). The protein operates within pyrimidine metabolism; dUMP biosynthesis; dUMP from dCTP (dUTP route): step 2/2. This enzyme is involved in nucleotide metabolism: it produces dUMP, the immediate precursor of thymidine nucleotides and it decreases the intracellular concentration of dUTP so that uracil cannot be incorporated into DNA. This chain is Deoxyuridine 5'-triphosphate nucleotidohydrolase, found in Leptothrix cholodnii (strain ATCC 51168 / LMG 8142 / SP-6) (Leptothrix discophora (strain SP-6)).